Here is an 807-residue protein sequence, read N- to C-terminus: Shutoff protein (807 aa).

The interval 1–88 (MESVEKKDSL…QVGRGDERHG (88 aa)) is disordered. Residues 16–29 (FATTASTDAANAPT) are compositionally biased toward polar residues. Basic and acidic residues-rich tracts occupy residues 59-70 (RSVPTEDKKQDQ) and 79-88 (QVGRGDERHG). Residues 280 to 345 (VMSELIVRRA…AVLVTVELEC (66 aa)) are binding to host EIF4G. The RRM domain maps to 348–466 (RFFADPEMQR…DLWTAFNERS (119 aa)). Residues tyrosine 365 and tyrosine 682 each carry the phosphotyrosine; by host modification. The disordered stretch occupies residues 684–807 (DPQSGEELNP…AGTARSPTQP (124 aa)). Over residues 726–743 (GRGGILGQSGRGGFGRGG) the composition is skewed to gly residues. Positions 744–755 (GGHDGRLGEPRR) are enriched in basic and acidic residues. Basic residues predominate over residues 756–765 (GSFRGRRGVR).

The protein belongs to the adenoviridae shutoff protein family. As to quaternary structure, monomer. Interacts with hexon protein; this interaction allows chaperoning and trimerization of hexon proteins. Interacts (via N-terminus) with host initiation factor EIF4G (via C-terminus). Interacts (via RRM domain) with viral mRNAs that contain the tripartite leader; this interaction allows ribosome shunting and expression of viral late mRNAs. Post-translationally, might be cleaved by the viral protease. In terms of processing, phosphorylated. Tyrosine phosphorylation enhances preferential binding to tripartite leader mRNAs and allows ribosome shunting. Methylated. Asymmetric dimethylation by host PRMT1 of the Arg/Gly-rich region may regulate shutoff protein binding to hexon and promote the capsid assembly in the nucleus.

It localises to the host cytoplasm. Protein that inhibits host translation while promoting late viral translation by ribosome shunting. Blocks host cap-dependent translation by binding to eIF4G, displacing MKNK1 from cap initiation complexes and preventing EIF4E phosphorylation. Binds to the tripartite leader sequence of viral late mRNAs and recruits host eIF4G, PABPC1/poly-A binding protein and 40S ribosomes subunits on viral mRNAs, allowing ribosome shunting and efficient translation of late viral mRNAs even though conventional translation via ribosome scanning from the cap has been shut off in the host cell. During assembly, acts as a chaperone protein that helps hexon proteins assembly into trimers. This chain is Shutoff protein, found in Homo sapiens (Human).